The following is a 320-amino-acid chain: Sensor histidine kinase YbdK (320 aa).

A helical transmembrane segment spans residues 1–21 (MLLFTAVISVPMLLLAVSVLM). Over 22–41 (SVIYDSMFKPMNHGMPFHRS) the chain is Extracellular. The helical transmembrane segment at 42–62 (FAYPAMIVVFLISLLLLAFLF) threads the bilayer. Residues 63 to 320 (SKSIHSLLHK…NGTGFLFSKE (258 aa)) are Cytoplasmic-facing. An HAMP domain is found at 67–120 (HSLLHKINLLNQTIRHLASDQRVPDKIEVKRADEIGELIKSVNLLIERTTYREL). A Histidine kinase domain is found at 135–320 (KLRHDINTPL…NGTGFLFSKE (186 aa)). Histidine 138 bears the Phosphohistidine; by autocatalysis mark.

The protein resides in the cell membrane. It catalyses the reaction ATP + protein L-histidine = ADP + protein N-phospho-L-histidine.. Member of the two-component regulatory system YbdK/YbdJ. Probably activates YbdJ by phosphorylation. This is Sensor histidine kinase YbdK (ybdK) from Bacillus subtilis (strain 168).